Consider the following 79-residue polypeptide: D-alanyl carrier protein (79 aa).

In terms of domain architecture, Carrier spans 1-77; the sequence is MDTKQGVLDI…KIVAKVESLE (77 aa). Residue S35 is modified to O-(pantetheine 4'-phosphoryl)serine.

The protein belongs to the DltC family. Post-translationally, 4'-phosphopantetheine is transferred from CoA to a specific serine of apo-DCP.

It localises to the cytoplasm. The protein operates within cell wall biogenesis; lipoteichoic acid biosynthesis. In terms of biological role, carrier protein involved in the D-alanylation of lipoteichoic acid (LTA). The loading of thioester-linked D-alanine onto DltC is catalyzed by D-alanine--D-alanyl carrier protein ligase DltA. The DltC-carried D-alanyl group is further transferred to cell membrane phosphatidylglycerol (PG) by forming an ester bond, probably catalyzed by DltD. D-alanylation of LTA plays an important role in modulating the properties of the cell wall in Gram-positive bacteria, influencing the net charge of the cell wall. The protein is D-alanyl carrier protein of Lactobacillus acidophilus (strain ATCC 700396 / NCK56 / N2 / NCFM).